The following is a 351-amino-acid chain: V-type proton ATPase subunit d1 (351 aa).

It belongs to the V-ATPase V0D/AC39 subunit family. In terms of assembly, V-ATPase is a heteromultimeric enzyme composed of a peripheral catalytic V1 complex (components A to H) attached to an integral membrane V0 proton pore complex (components: a, c, c'', d and e).

The protein localises to the vacuole membrane. Subunit of the integral membrane V0 complex of vacuolar ATPase. Vacuolar ATPase is responsible for acidifying a variety of intracellular compartments in eukaryotic cells, thus providing most of the energy required for transport processes in the vacuolar system. The protein is V-type proton ATPase subunit d1 (VHA-d1) of Arabidopsis thaliana (Mouse-ear cress).